We begin with the raw amino-acid sequence, 208 residues long: Mediator of RNA polymerase II transcription subunit 18 (208 aa).

The protein belongs to the Mediator complex subunit 18 family. As to quaternary structure, component of the Mediator complex.

It localises to the nucleus. Functionally, component of the Mediator complex, a coactivator involved in the regulated transcription of nearly all RNA polymerase II-dependent genes. Mediator functions as a bridge to convey information from gene-specific regulatory proteins to the basal RNA polymerase II transcription machinery. Mediator is recruited to promoters by direct interactions with regulatory proteins and serves as a scaffold for the assembly of a functional preinitiation complex with RNA polymerase II and the general transcription factors. This is Mediator of RNA polymerase II transcription subunit 18 (med18) from Danio rerio (Zebrafish).